The sequence spans 234 residues: ATP-dependent dethiobiotin synthetase BioD (234 aa).

12–17 (DVGKTF) lines the ATP pocket. A Mg(2+)-binding site is contributed by Thr-16. Lys-37 is a catalytic residue. Ser-41 contributes to the substrate binding site. Residues Asp-52, 118 to 121 (EGAG), and 178 to 179 (SQ) each bind ATP. 2 residues coordinate Mg(2+): Asp-52 and Glu-118.

This sequence belongs to the dethiobiotin synthetase family. As to quaternary structure, homodimer. Requires Mg(2+) as cofactor.

Its subcellular location is the cytoplasm. It carries out the reaction (7R,8S)-7,8-diammoniononanoate + CO2 + ATP = (4R,5S)-dethiobiotin + ADP + phosphate + 3 H(+). The protein operates within cofactor biosynthesis; biotin biosynthesis; biotin from 7,8-diaminononanoate: step 1/2. Functionally, catalyzes a mechanistically unusual reaction, the ATP-dependent insertion of CO2 between the N7 and N8 nitrogen atoms of 7,8-diaminopelargonic acid (DAPA, also called 7,8-diammoniononanoate) to form a ureido ring. The chain is ATP-dependent dethiobiotin synthetase BioD from Phenylobacterium zucineum (strain HLK1).